A 147-amino-acid chain; its full sequence is Large ribosomal subunit protein uL15 (147 aa).

The span at 1–20 shows a compositional bias: basic and acidic residues; it reads MTLRLNDLKPADGARTERTR. A disordered region spans residues 1-61; sequence MTLRLNDLKP…GFEGGQTPMQ (61 aa). A compositionally biased stretch (gly residues) spans 23–33; sequence RGIGSGLGKTA. Over residues 34–47 the composition is skewed to basic residues; the sequence is GRGHKGSFARKGGG.

It belongs to the universal ribosomal protein uL15 family. In terms of assembly, part of the 50S ribosomal subunit.

Its function is as follows. Binds to the 23S rRNA. This Xanthomonas euvesicatoria pv. vesicatoria (strain 85-10) (Xanthomonas campestris pv. vesicatoria) protein is Large ribosomal subunit protein uL15.